The sequence spans 102 residues: uncharacterized protein (102 aa).

2 helical membrane-spanning segments follow: residues 21-43 (FSSSALVGIAPLTAYSALVTPVF) and 58-80 (SFAVNTPFKSCWCVIVMCSYFFC).

It localises to the membrane. This is an uncharacterized protein from Saccharomyces cerevisiae (strain ATCC 204508 / S288c) (Baker's yeast).